We begin with the raw amino-acid sequence, 154 residues long: IQ domain-containing protein F3 (154 aa).

An IQ domain is found at 89 to 118; the sequence is QEQATVKLQSCIRMWQCRQCYRQMCNALCL.

The sequence is that of IQ domain-containing protein F3 (IQCF3) from Homo sapiens (Human).